Reading from the N-terminus, the 366-residue chain is Ribosomal RNA large subunit methyltransferase M (366 aa).

S-adenosyl-L-methionine contacts are provided by residues Ser-188, 221–224 (CPGG), Asp-240, Asp-260, and Asp-277. The active-site Proton acceptor is the Lys-306.

It belongs to the class I-like SAM-binding methyltransferase superfamily. RNA methyltransferase RlmE family. RlmM subfamily. In terms of assembly, monomer.

The protein localises to the cytoplasm. The catalysed reaction is cytidine(2498) in 23S rRNA + S-adenosyl-L-methionine = 2'-O-methylcytidine(2498) in 23S rRNA + S-adenosyl-L-homocysteine + H(+). In terms of biological role, catalyzes the 2'-O-methylation at nucleotide C2498 in 23S rRNA. The polypeptide is Ribosomal RNA large subunit methyltransferase M (Shigella dysenteriae serotype 1 (strain Sd197)).